The following is a 334-amino-acid chain: 6-phosphogluconolactonase (334 aa).

The protein belongs to the cycloisomerase 2 family.

It catalyses the reaction 6-phospho-D-glucono-1,5-lactone + H2O = 6-phospho-D-gluconate + H(+). Its pathway is carbohydrate degradation; pentose phosphate pathway; D-ribulose 5-phosphate from D-glucose 6-phosphate (oxidative stage): step 2/3. Its function is as follows. Catalyzes the hydrolysis of 6-phosphogluconolactone to 6-phosphogluconate. This is 6-phosphogluconolactonase from Buchnera aphidicola subsp. Acyrthosiphon pisum (strain 5A).